The sequence spans 697 residues: Elongation factor G (697 aa).

A tr-type G domain is found at 10-285 (ERTRNIGIMA…AVVDYLPSPL (276 aa)). GTP-binding positions include 19–26 (AHIDAGKT), 83–87 (DTPGH), and 137–140 (NKMD).

It belongs to the TRAFAC class translation factor GTPase superfamily. Classic translation factor GTPase family. EF-G/EF-2 subfamily.

Its subcellular location is the cytoplasm. Catalyzes the GTP-dependent ribosomal translocation step during translation elongation. During this step, the ribosome changes from the pre-translocational (PRE) to the post-translocational (POST) state as the newly formed A-site-bound peptidyl-tRNA and P-site-bound deacylated tRNA move to the P and E sites, respectively. Catalyzes the coordinated movement of the two tRNA molecules, the mRNA and conformational changes in the ribosome. This Pediococcus pentosaceus (strain ATCC 25745 / CCUG 21536 / LMG 10740 / 183-1w) protein is Elongation factor G.